A 91-amino-acid polypeptide reads, in one-letter code: Potassium channel toxin TtrKIK (91 aa).

An N-terminal signal peptide occupies residues 1-25 (MVATNRCCVFALLFALLLVHSLTEA). Positions 26–44 (GKGKEVLGKIKDKLIEAKD) are excised as a propeptide. One can recognise a BetaSPN-type CS-alpha/beta domain in the interval 58-91 (EYACPAIEKFCEDHCAAKKAVGKCDDFKCNCIKL). 3 disulfide bridges follow: cysteine 61/cysteine 81, cysteine 68/cysteine 86, and cysteine 72/cysteine 88.

It belongs to the long chain scorpion toxin family. Class 2 subfamily. In terms of tissue distribution, expressed by the venom gland.

It localises to the secreted. Its function is as follows. The full peptide presents antibacterial and cytotoxic activities. The synthetic C-terminus (AA 33-76) inhibits voltage-gated potassium channels Kv1.1/KCNA1, Kv1.2/KCNA2, and Kv1.3/KCNA3. This is Potassium channel toxin TtrKIK from Tityus trivittatus (Argentinean scorpion).